The following is a 265-amino-acid chain: tRNA pseudouridine synthase A (265 aa).

Asp53 (nucleophile) is an active-site residue. Tyr111 lines the substrate pocket.

It belongs to the tRNA pseudouridine synthase TruA family. In terms of assembly, homodimer.

It catalyses the reaction uridine(38/39/40) in tRNA = pseudouridine(38/39/40) in tRNA. Functionally, formation of pseudouridine at positions 38, 39 and 40 in the anticodon stem and loop of transfer RNAs. This is tRNA pseudouridine synthase A from Acinetobacter baumannii (strain SDF).